Consider the following 552-residue polypeptide: ATP synthase subunit alpha (552 aa).

Position 173–180 (173–180 (GDRQTGKS)) interacts with ATP. A disordered region spans residues 509-552 (KPQFSGGSKGSNVPKDVDAGATDADDISQEKITTRKGGATAARG).

It belongs to the ATPase alpha/beta chains family. F-type ATPases have 2 components, CF(1) - the catalytic core - and CF(0) - the membrane proton channel. CF(1) has five subunits: alpha(3), beta(3), gamma(1), delta(1), epsilon(1). CF(0) has three main subunits: a(1), b(2) and c(9-12). The alpha and beta chains form an alternating ring which encloses part of the gamma chain. CF(1) is attached to CF(0) by a central stalk formed by the gamma and epsilon chains, while a peripheral stalk is formed by the delta and b chains.

The protein localises to the cell membrane. It catalyses the reaction ATP + H2O + 4 H(+)(in) = ADP + phosphate + 5 H(+)(out). Its function is as follows. Produces ATP from ADP in the presence of a proton gradient across the membrane. The alpha chain is a regulatory subunit. The protein is ATP synthase subunit alpha of Kineococcus radiotolerans (strain ATCC BAA-149 / DSM 14245 / SRS30216).